The sequence spans 303 residues: tRNA-cytidine(32) 2-sulfurtransferase (303 aa).

Positions 49 to 54 (SGGKDS) match the PP-loop motif motif. [4Fe-4S] cluster-binding residues include cysteine 124, cysteine 127, and cysteine 215.

Belongs to the TtcA family. In terms of assembly, homodimer. Mg(2+) serves as cofactor. [4Fe-4S] cluster is required as a cofactor.

It is found in the cytoplasm. It catalyses the reaction cytidine(32) in tRNA + S-sulfanyl-L-cysteinyl-[cysteine desulfurase] + AH2 + ATP = 2-thiocytidine(32) in tRNA + L-cysteinyl-[cysteine desulfurase] + A + AMP + diphosphate + H(+). Its pathway is tRNA modification. Catalyzes the ATP-dependent 2-thiolation of cytidine in position 32 of tRNA, to form 2-thiocytidine (s(2)C32). The sulfur atoms are provided by the cysteine/cysteine desulfurase (IscS) system. This is tRNA-cytidine(32) 2-sulfurtransferase from Anaeromyxobacter sp. (strain Fw109-5).